The primary structure comprises 734 residues: Photosystem I P700 chlorophyll a apoprotein A2 (734 aa).

8 helical membrane passes run 46–69 (IFAS…FHVA), 135–158 (LYAG…LHLQ), 175–199 (LNHH…HVAI), 273–291 (IAHH…GHMY), 330–353 (LHFQ…QHLY), 369–395 (AALY…IFFV), 417–439 (AIIS…LYVH), and 517–535 (FLVH…LILV). Positions 559 and 568 each coordinate [4Fe-4S] cluster. 2 consecutive transmembrane segments (helical) span residues 575–596 (AFYL…YWHW) and 643–665 (LSVW…MFLI). Positions 654, 662, and 670 each coordinate chlorophyll a. Tryptophan 671 lines the phylloquinone pocket. Residues 707–727 (LVGLVHFSVGYVLTYAAFVIA) traverse the membrane as a helical segment.

Belongs to the PsaA/PsaB family. In terms of assembly, the PsaA/B heterodimer binds the P700 chlorophyll special pair and subsequent electron acceptors. PSI consists of a core antenna complex that captures photons, and an electron transfer chain that converts photonic excitation into a charge separation. The eukaryotic PSI reaction center is composed of at least 11 subunits. P700 is a chlorophyll a/chlorophyll a' dimer, A0 is one or more chlorophyll a, A1 is one or both phylloquinones and FX is a shared 4Fe-4S iron-sulfur center. is required as a cofactor.

It is found in the plastid. It localises to the chloroplast thylakoid membrane. The catalysed reaction is reduced [plastocyanin] + hnu + oxidized [2Fe-2S]-[ferredoxin] = oxidized [plastocyanin] + reduced [2Fe-2S]-[ferredoxin]. Functionally, psaA and PsaB bind P700, the primary electron donor of photosystem I (PSI), as well as the electron acceptors A0, A1 and FX. PSI is a plastocyanin/cytochrome c6-ferredoxin oxidoreductase, converting photonic excitation into a charge separation, which transfers an electron from the donor P700 chlorophyll pair to the spectroscopically characterized acceptors A0, A1, FX, FA and FB in turn. Oxidized P700 is reduced on the lumenal side of the thylakoid membrane by plastocyanin or cytochrome c6. This chain is Photosystem I P700 chlorophyll a apoprotein A2, found in Cyanidium caldarium (Red alga).